The following is a 62-amino-acid chain: Small, acid-soluble spore protein A (62 aa).

This sequence belongs to the alpha/beta-type SASP family.

SASP are bound to spore DNA. They are double-stranded DNA-binding proteins that cause DNA to change to an a-like conformation. They protect the DNA backbone from chemical and enzymatic cleavage and are thus involved in dormant spore's high resistance to UV light. This Priestia megaterium (Bacillus megaterium) protein is Small, acid-soluble spore protein A (sasP-A).